Consider the following 339-residue polypeptide: Putative NADP-dependent oxidoreductase YfmJ (339 aa).

Residues 156–159 (GAVG), Lys-182, Tyr-198, Asn-222, 244–250 (CGAISSY), 277–279 (FIV), and Asn-327 contribute to the NADP(+) site.

This sequence belongs to the NADP-dependent oxidoreductase L4BD family.

In terms of biological role, putative quinone oxidoreductase that may contribute to the degradation of aromatic compounds. This chain is Putative NADP-dependent oxidoreductase YfmJ (yfmJ), found in Bacillus subtilis (strain 168).